Here is a 234-residue protein sequence, read N- to C-terminus: Triosephosphate isomerase (234 aa).

Substrate is bound at residue asparagine 8–lysine 10. Catalysis depends on histidine 90, which acts as the Electrophile. The active-site Proton acceptor is glutamate 159. The substrate site is built by glycine 165 and serine 197.

Belongs to the triosephosphate isomerase family. Homodimer.

The protein localises to the cytoplasm. The catalysed reaction is D-glyceraldehyde 3-phosphate = dihydroxyacetone phosphate. It functions in the pathway carbohydrate biosynthesis; gluconeogenesis. Its pathway is carbohydrate degradation; glycolysis; D-glyceraldehyde 3-phosphate from glycerone phosphate: step 1/1. Involved in the gluconeogenesis. Catalyzes stereospecifically the conversion of dihydroxyacetone phosphate (DHAP) to D-glyceraldehyde-3-phosphate (G3P). The chain is Triosephosphate isomerase from Helicobacter pylori (strain Shi470).